We begin with the raw amino-acid sequence, 458 residues long: Cobyrinate a,c-diamide synthase (458 aa).

Residues 254-445 (KIGVIRDQVF…IHVHFLSDKS (192 aa)) enclose the GATase cobBQ-type domain. C335 functions as the Nucleophile in the catalytic mechanism.

The protein belongs to the CobB/CbiA family. Mg(2+) serves as cofactor.

It carries out the reaction cob(II)yrinate + 2 L-glutamine + 2 ATP + 2 H2O = cob(II)yrinate a,c diamide + 2 L-glutamate + 2 ADP + 2 phosphate + 2 H(+). It participates in cofactor biosynthesis; adenosylcobalamin biosynthesis; cob(II)yrinate a,c-diamide from sirohydrochlorin (anaerobic route): step 10/10. Its function is as follows. Catalyzes the ATP-dependent amidation of the two carboxylate groups at positions a and c of cobyrinate, using either L-glutamine or ammonia as the nitrogen source. The protein is Cobyrinate a,c-diamide synthase of Archaeoglobus fulgidus (strain ATCC 49558 / DSM 4304 / JCM 9628 / NBRC 100126 / VC-16).